Consider the following 626-residue polypeptide: UPF0313 protein MM_1287 (626 aa).

Positions 206–227 (GKGKEKAGEQDESENATEEVAK) are disordered. A Radical SAM core domain is found at 320-589 (ALEMVKFSLT…AMQRALMHYR (270 aa)). The [4Fe-4S] cluster site is built by cysteine 334, cysteine 338, and cysteine 341.

Belongs to the UPF0313 family. Requires [4Fe-4S] cluster as cofactor.

In Methanosarcina mazei (strain ATCC BAA-159 / DSM 3647 / Goe1 / Go1 / JCM 11833 / OCM 88) (Methanosarcina frisia), this protein is UPF0313 protein MM_1287.